The primary structure comprises 854 residues: DNA mismatch repair protein MutS (854 aa).

614 to 621 (GPNMGGKS) serves as a coordination point for ATP.

It belongs to the DNA mismatch repair MutS family.

In terms of biological role, this protein is involved in the repair of mismatches in DNA. It is possible that it carries out the mismatch recognition step. This protein has a weak ATPase activity. The protein is DNA mismatch repair protein MutS of Sodalis glossinidius (strain morsitans).